Reading from the N-terminus, the 419-residue chain is Creatine kinase S-type, mitochondrial (419 aa).

The N-terminal 39 residues, 1–39 (MASAFSKLLTGRNASLLFTTLGTSALTTGYLLNRQKVSA), are a transit peptide targeting the mitochondrion. Positions 40-64 (DAREQHKLFPPSADYPDLRKHNNCM) are cardiolipin-binding. Residues 46 to 132 (KLFPPSADYP…FDPVIKLRHN (87 aa)) form the Phosphagen kinase N-terminal domain. One can recognise a Phosphagen kinase C-terminal domain in the interval 159 to 401 (YVLSSRVRTG…NYLVDCEKKL (243 aa)). Residues 162–166 (SSRVR) and His225 each bind ATP. Tyr255 bears the Phosphotyrosine mark. ATP contacts are provided by residues Arg270, Arg326, 354-359 (RGTGGV), and Asp369. Thr356 bears the Phosphothreonine mark.

Belongs to the ATP:guanido phosphotransferase family. In terms of assembly, exists as an octamer composed of four CKMT2 homodimers.

The protein localises to the mitochondrion inner membrane. The catalysed reaction is creatine + ATP = N-phosphocreatine + ADP + H(+). Its function is as follows. Reversibly catalyzes the transfer of phosphate between ATP and various phosphogens (e.g. creatine phosphate). Creatine kinase isoenzymes play a central role in energy transduction in tissues with large, fluctuating energy demands, such as skeletal muscle, heart, brain and spermatozoa. The sequence is that of Creatine kinase S-type, mitochondrial (Ckmt2) from Mus musculus (Mouse).